Reading from the N-terminus, the 435-residue chain is MDTWEDDRVDQRACLICGDRATGLHYGIISCEGCKGFFKRSICNKRVYRCSRDKNCVMSRKQRNRCQYCRLLKCLQMGMNRKAIREDGMPGGRNKSIGPVQISDEEIERIMSGQEFEEEANTSWSNNGDSDHSSPGNGVSESNQPSPVSTPSSSRSMELNGFGSLRDQYLGTPGPMHYQYLPHLFSYSAHPTLIPTQSRSLDPQSHTLINQLLTAEDIEPLSTPMLIEDGYKVTQSELFALLCRLADELLFRQITWVKKLPFFCDLSIKDYTCLLSTTWQELILLSSLTTYSKQIFGDLADVTSKYSPSEDELHRFSEDGMEVMERLIYLFRKFSQLKVSNEEYVCMKAINFLNQDIQGISSVSQVEQLNKRYWYVCQDFTEYRYPHQPNRFPDLMMCLPEVRYIAGKLVNVPLEQLPLLFKAFLHSCKTSLTKE.

The segment at residues 11–86 (QRACLICGDR…MGMNRKAIRE (76 aa)) is a DNA-binding region (nuclear receptor). NR C4-type zinc fingers lie at residues 14 to 34 (CLIC…CEGC) and 50 to 69 (CSRD…CQYC). Residues 84 to 157 (IREDGMPGGR…VSTPSSSRSM (74 aa)) are disordered. Over residues 121–141 (NTSWSNNGDSDHSSPGNGVSE) the composition is skewed to polar residues. Residues 142-156 (SNQPSPVSTPSSSRS) are compositionally biased toward low complexity. One can recognise an NR LBD domain in the interval 204 to 435 (QSHTLINQLL…HSCKTSLTKE (232 aa)).

It belongs to the nuclear hormone receptor family. NR6 subfamily. Homodimer.

It localises to the cytoplasm. The protein localises to the nucleus. In terms of biological role, probable orphan nuclear receptor. Binds to a response element containing repeats of the motif 5'-AGGTCA-3'. Required for anterior-posterior patterning during organogenesis. Acts with chordin to play a role in patterning the midbrain-hindbrain. Isoform Em is required for integrin-mediated cell matrix interaction during neurulation and for the morphogenetic movements leading to formation of the neural tube. Also mediates the effect of retinoic acid on primary neurogenesis. The sequence is that of Nuclear receptor subfamily 6 group A member 1 from Xenopus tropicalis (Western clawed frog).